A 488-amino-acid polypeptide reads, in one-letter code: Adenylosuccinate synthetase 1, chloroplastic (488 aa).

The transit peptide at Met1–Ser47 directs the protein to the chloroplast. GTP contacts are provided by residues Gly75 to Lys81 and Gly103 to Thr105. Asp76 functions as the Proton acceptor in the catalytic mechanism. Positions 76 and 103 each coordinate Mg(2+). IMP contacts are provided by residues Asp76–Lys79, Asn101–His104, Thr193, Arg207, Gln287, Thr302, and Arg366. The active-site Proton donor is His104. Residue Thr362 to Arg368 participates in substrate binding. Residues Arg368, Lys394–Asp396, and Gly477–Gly479 contribute to the GTP site.

It belongs to the adenylosuccinate synthetase family. Homodimer. It depends on Mg(2+) as a cofactor.

The protein resides in the plastid. The protein localises to the chloroplast. It carries out the reaction IMP + L-aspartate + GTP = N(6)-(1,2-dicarboxyethyl)-AMP + GDP + phosphate + 2 H(+). It participates in purine metabolism; AMP biosynthesis via de novo pathway; AMP from IMP: step 1/2. Plays an important role in the de novo pathway and in the salvage pathway of purine nucleotide biosynthesis. Catalyzes the first committed step in the biosynthesis of AMP from IMP. This chain is Adenylosuccinate synthetase 1, chloroplastic, found in Oryza sativa subsp. japonica (Rice).